A 421-amino-acid chain; its full sequence is Early growth response protein 2 (421 aa).

The span at cysteine 127–serine 145 shows a compositional bias: low complexity. 3 disordered regions span residues cysteine 127–aspartate 152, serine 179–glycine 200, and serine 223–tyrosine 288. Polar residues predominate over residues proline 236 to glycine 247. C2H2-type zinc fingers lie at residues tyrosine 288 to histidine 312, phenylalanine 318 to histidine 340, and phenylalanine 346 to histidine 368.

Belongs to the EGR C2H2-type zinc-finger protein family.

The protein localises to the nucleus. In terms of biological role, sequence-specific DNA-binding transcription factor. The polypeptide is Early growth response protein 2 (egr2) (Xenopus laevis (African clawed frog)).